The following is a 402-amino-acid chain: Propionate kinase (402 aa).

2 residues coordinate ATP: Asn11 and Lys18. Residue Asn11 participates in Mg(2+) binding. Arg86 is a binding site for substrate. The active-site Proton donor/acceptor is the Asp143. ATP is bound by residues His175, 203–207 (HLGNG), 278–280 (DLR), and 326–330 (GIGEN).

It belongs to the acetokinase family. TdcD subfamily. In terms of assembly, homodimer. Mg(2+) is required as a cofactor.

The catalysed reaction is propanoate + ATP = propanoyl phosphate + ADP. It functions in the pathway amino-acid degradation; L-threonine degradation via propanoate pathway; propanoate from L-threonine: step 4/4. Its function is as follows. Catalyzes the conversion of propionyl phosphate and ADP to propionate and ATP. This Enterobacter sp. (strain 638) protein is Propionate kinase.